Reading from the N-terminus, the 414-residue chain is Voltage-gated ClC-type chloride channel ClcB (414 aa).

Transmembrane regions (helical) follow at residues 5–25 (LVISIMLGMVSALIVWLFHQA), 54–74 (ALTPALGGLAAGLLLWAYQRY), 116–136 (SAIGREGAMVLLAALFASVFA), 147–167 (LWVACGAAAGMASAYHAPLAG), 169–189 (LFIAEILFGTLMLASLGPVVI), 220–240 (VQYFLMALLGLMAGFSGPLFL), 255–275 (LLPPLQLALGGIIVGLLSLIF), 292–312 (TPPGVLLIGGILICKLLAVLA), 327–347 (LFVGAALGMLCGQIFSLWPVL), 353–373 (LLMALTGMATLLAATTHAPIM), and 381–401 (MTGEYTLLPGLLLSCVIATTI).

The protein belongs to the chloride channel (TC 2.A.49) family. ClcB subfamily.

The protein resides in the cell inner membrane. Probably acts as an electrical shunt for an outwardly-directed proton pump that is linked to amino acid decarboxylation, as part of the extreme acid resistance (XAR) response. This chain is Voltage-gated ClC-type chloride channel ClcB, found in Yersinia pestis.